The primary structure comprises 473 residues: Arginine biosynthesis bifunctional protein ArgJ, mitochondrial (473 aa).

Substrate is bound by residues Thr201, Lys230, Thr241, Glu328, Asn468, and Thr473. Thr241 serves as the catalytic Nucleophile.

It belongs to the ArgJ family. Heterodimer of an alpha and a beta chain. In terms of processing, the alpha and beta chains are autoproteolytically processed from a single precursor protein within the mitochondrion.

It is found in the mitochondrion matrix. It carries out the reaction N(2)-acetyl-L-ornithine + L-glutamate = N-acetyl-L-glutamate + L-ornithine. The enzyme catalyses L-glutamate + acetyl-CoA = N-acetyl-L-glutamate + CoA + H(+). Its pathway is amino-acid biosynthesis; L-arginine biosynthesis; L-ornithine and N-acetyl-L-glutamate from L-glutamate and N(2)-acetyl-L-ornithine (cyclic): step 1/1. It participates in amino-acid biosynthesis; L-arginine biosynthesis; N(2)-acetyl-L-ornithine from L-glutamate: step 1/4. Catalyzes two activities which are involved in the cyclic version of arginine biosynthesis: the synthesis of acetylglutamate from glutamate and acetyl-CoA, and of ornithine by transacetylation between acetylornithine and glutamate. The protein is Arginine biosynthesis bifunctional protein ArgJ, mitochondrial of Ajellomyces capsulatus (strain G186AR / H82 / ATCC MYA-2454 / RMSCC 2432) (Darling's disease fungus).